Here is an 880-residue protein sequence, read N- to C-terminus: DNA mismatch repair protein MutS (880 aa).

625-632 is an ATP binding site; that stretch reads GPNMAGKS.

It belongs to the DNA mismatch repair MutS family.

Its function is as follows. This protein is involved in the repair of mismatches in DNA. It is possible that it carries out the mismatch recognition step. This protein has a weak ATPase activity. This chain is DNA mismatch repair protein MutS, found in Alkaliphilus oremlandii (strain OhILAs) (Clostridium oremlandii (strain OhILAs)).